Reading from the N-terminus, the 416-residue chain is UDP-N-acetylmuramoylalanine--D-glutamate ligase (416 aa).

Residue 108–114 (GTTGKTT) participates in ATP binding.

The protein belongs to the MurCDEF family.

The protein resides in the cytoplasm. The enzyme catalyses UDP-N-acetyl-alpha-D-muramoyl-L-alanine + D-glutamate + ATP = UDP-N-acetyl-alpha-D-muramoyl-L-alanyl-D-glutamate + ADP + phosphate + H(+). Its pathway is cell wall biogenesis; peptidoglycan biosynthesis. Cell wall formation. Catalyzes the addition of glutamate to the nucleotide precursor UDP-N-acetylmuramoyl-L-alanine (UMA). This Chlamydia trachomatis serovar A (strain ATCC VR-571B / DSM 19440 / HAR-13) protein is UDP-N-acetylmuramoylalanine--D-glutamate ligase.